Consider the following 829-residue polypeptide: Leucine--tRNA ligase (829 aa).

Positions 42-52 match the 'HIGH' region motif; it reads PYPSGRIHMGH. The short motif at 584–588 is the 'KMSKS' region element; the sequence is KMSKS. ATP is bound at residue Lys587.

The protein belongs to the class-I aminoacyl-tRNA synthetase family.

The protein localises to the cytoplasm. It catalyses the reaction tRNA(Leu) + L-leucine + ATP = L-leucyl-tRNA(Leu) + AMP + diphosphate. In Syntrophobacter fumaroxidans (strain DSM 10017 / MPOB), this protein is Leucine--tRNA ligase.